A 133-amino-acid polypeptide reads, in one-letter code: Glycine cleavage system H protein (133 aa).

The Lipoyl-binding domain maps to 24–106 (IATIGISAYA…YGDGWLLKVR (83 aa)). Residue Lys65 is modified to N6-lipoyllysine.

It belongs to the GcvH family. In terms of assembly, the glycine cleavage system is composed of four proteins: P, T, L and H. It depends on (R)-lipoate as a cofactor.

The glycine cleavage system catalyzes the degradation of glycine. The H protein shuttles the methylamine group of glycine from the P protein to the T protein. The polypeptide is Glycine cleavage system H protein (Crocosphaera subtropica (strain ATCC 51142 / BH68) (Cyanothece sp. (strain ATCC 51142))).